We begin with the raw amino-acid sequence, 313 residues long: 4-diphosphocytidyl-2-C-methyl-D-erythritol kinase (313 aa).

The active site involves lysine 27. 110 to 120 (PIGGGVGGGSS) serves as a coordination point for ATP. Aspartate 152 is an active-site residue.

This sequence belongs to the GHMP kinase family. IspE subfamily.

The enzyme catalyses 4-CDP-2-C-methyl-D-erythritol + ATP = 4-CDP-2-C-methyl-D-erythritol 2-phosphate + ADP + H(+). It functions in the pathway isoprenoid biosynthesis; isopentenyl diphosphate biosynthesis via DXP pathway; isopentenyl diphosphate from 1-deoxy-D-xylulose 5-phosphate: step 3/6. In terms of biological role, catalyzes the phosphorylation of the position 2 hydroxy group of 4-diphosphocytidyl-2C-methyl-D-erythritol. In Histophilus somni (strain 2336) (Haemophilus somnus), this protein is 4-diphosphocytidyl-2-C-methyl-D-erythritol kinase.